Consider the following 134-residue polypeptide: Large ribosomal subunit protein eL27 (134 aa).

The KOW domain occupies 5-40 (LKSGKVVVVLSGRFAGKKAVIVRNFDDGTSSRPYGH).

It belongs to the eukaryotic ribosomal protein eL27 family.

In Pyrobotrys stellatus (Green alga), this protein is Large ribosomal subunit protein eL27 (RPL27).